A 360-amino-acid chain; its full sequence is Ferredoxin--NADP reductase, leaf isozyme 1, chloroplastic (360 aa).

A chloroplast-targeting transit peptide spans 1–49; it reads MAAAISAAVSLPSSKSSSLLTKISSVSPQRIFLKKSTVCYRRVVSVKAQ. Positions 81–203 constitute an FAD-binding FR-type domain; sequence KNPYTGRCLL…TGPVGKEMLM (123 aa). Residues 139–142, 160–162, tyrosine 166, and 177–179 contribute to the FAD site; these read RLYS, CVK, and VCS. NADP(+) is bound by residues serine 142 and lysine 162. An intrachain disulfide couples cysteine 178 to cysteine 183. Phosphoserine is present on serine 179. Phosphothreonine is present on threonine 210. Threonine 218 contributes to the FAD binding site. NADP(+) is bound by residues threonine 218, 250-251, 280-281, lysine 290, 319-320, and glutamate 358; these read VP, SR, and GL.

The protein belongs to the ferredoxin--NADP reductase type 1 family. As to quaternary structure, heterodimer with LFNR2. Interacts with PGRL1A and PGRL1B. Interacts with TIC62. Component of high molecular weight thylakoid LFNRs-containing protein complexes containing LIR1, LFNR1, LFNR2, TIC62 and TROL proteins. Interacts directly with LIR1 and TIC62; LIR1 increases the affinity of LFNR1 and LFNR2 for TIC62. Binds to YCF54 in chloroplasts. Requires FAD as cofactor. May form interchain disulfide bonds with LIR1. In terms of tissue distribution, expressed in shoots. Restricted to green tissues, being more abundant in siliques.

It localises to the plastid. The protein localises to the chloroplast stroma. Its subcellular location is the chloroplast thylakoid membrane. The enzyme catalyses 2 reduced [2Fe-2S]-[ferredoxin] + NADP(+) + H(+) = 2 oxidized [2Fe-2S]-[ferredoxin] + NADPH. The protein operates within energy metabolism; photosynthesis. Functionally, plays a key role in regulating the relative amounts of cyclic and non-cyclic electron flow to meet the demands of the plant for ATP and reducing power. Probable electron donor required for the MgProto monomethylester (MgProtoME) cyclase complex reaction to form protochlorophyllide, thus connecting chlorophyll synthesis with photosynthetic activity. The polypeptide is Ferredoxin--NADP reductase, leaf isozyme 1, chloroplastic (Arabidopsis thaliana (Mouse-ear cress)).